A 338-amino-acid chain; its full sequence is NADPH dehydrogenase (338 aa).

Residue 23–26 participates in FMN binding; it reads SPMC. Y28 provides a ligand contact to substrate. Residues A60 and Q102 each coordinate FMN. 164–167 is a substrate binding site; that stretch reads HAAH. FMN-binding positions include R215 and 307 to 308; that span reads GR.

The protein belongs to the NADH:flavin oxidoreductase/NADH oxidase family. NamA subfamily. In terms of assembly, homotetramer. Composed of a dimer of active dimers. Requires FMN as cofactor.

It catalyses the reaction A + NADPH + H(+) = AH2 + NADP(+). With respect to regulation, inhibited by p-hydroxybenzaldehyde (pHBA) and p-nitrophenol (pNP). Its function is as follows. Catalyzes the reduction of the double bond of an array of alpha,beta-unsaturated aldehydes and ketones. It also reduces the nitro group of nitroester and nitroaromatic compounds. It could have a role in detoxification processes. The protein is NADPH dehydrogenase (namA) of Bacillus subtilis (strain 168).